The chain runs to 572 residues: Methionine--tRNA ligase (572 aa).

A 'HIGH' region motif is present at residues 11 to 21 (PYINGIKHLGN). Zn(2+)-binding residues include Cys143, Cys146, Cys156, and Cys159. A 'KMSKS' region motif is present at residues 346–350 (QFSTS). Thr349 provides a ligand contact to ATP.

This sequence belongs to the class-I aminoacyl-tRNA synthetase family. MetG type 1 subfamily. In terms of assembly, monomer. The cofactor is Zn(2+).

It localises to the cytoplasm. The enzyme catalyses tRNA(Met) + L-methionine + ATP = L-methionyl-tRNA(Met) + AMP + diphosphate. Is required not only for elongation of protein synthesis but also for the initiation of all mRNA translation through initiator tRNA(fMet) aminoacylation. The polypeptide is Methionine--tRNA ligase (Ruegeria pomeroyi (strain ATCC 700808 / DSM 15171 / DSS-3) (Silicibacter pomeroyi)).